Reading from the N-terminus, the 1508-residue chain is DNA-directed RNA polymerase subunit beta' (1508 aa).

Cys-71, Cys-73, Cys-86, and Cys-89 together coordinate Zn(2+). Mg(2+) is bound by residues Asp-470, Asp-472, and Asp-474. Residues Cys-804, Cys-878, Cys-885, and Cys-888 each contribute to the Zn(2+) site.

This sequence belongs to the RNA polymerase beta' chain family. As to quaternary structure, the RNAP catalytic core consists of 2 alpha, 1 beta, 1 beta' and 1 omega subunit. When a sigma factor is associated with the core the holoenzyme is formed, which can initiate transcription. The cofactor is Mg(2+). Requires Zn(2+) as cofactor.

The enzyme catalyses RNA(n) + a ribonucleoside 5'-triphosphate = RNA(n+1) + diphosphate. In terms of biological role, DNA-dependent RNA polymerase catalyzes the transcription of DNA into RNA using the four ribonucleoside triphosphates as substrates. The protein is DNA-directed RNA polymerase subunit beta' of Campylobacter fetus subsp. fetus (strain 82-40).